Here is a 175-residue protein sequence, read N- to C-terminus: B9 domain-containing protein 2 (175 aa).

The C2 B9-type domain occupies 2–118; the sequence is AEVHVIGQII…DCPTWRPLGS (117 aa).

It belongs to the B9D family. As to quaternary structure, part of the tectonic-like complex (also named B9 complex). Interacts with TUBG1. Highest expression in thymus and skeletal muscle. Also expressed in spleen, kidney, lung, heart, microglia and liver. Detected in brain (at protein level).

Its subcellular location is the cytoplasm. The protein localises to the cytoskeleton. It is found in the cilium basal body. The protein resides in the cilium axoneme. It localises to the nucleus. Its function is as follows. Component of the tectonic-like complex, a complex localized at the transition zone of primary cilia and acting as a barrier that prevents diffusion of transmembrane proteins between the cilia and plasma membranes. This is B9 domain-containing protein 2 (B9d2) from Mus musculus (Mouse).